A 305-amino-acid chain; its full sequence is UDP-3-O-acyl-N-acetylglucosamine deacetylase (305 aa).

3 residues coordinate Zn(2+): histidine 79, histidine 238, and aspartate 242. The active-site Proton donor is the histidine 265.

This sequence belongs to the LpxC family. It depends on Zn(2+) as a cofactor.

It carries out the reaction a UDP-3-O-[(3R)-3-hydroxyacyl]-N-acetyl-alpha-D-glucosamine + H2O = a UDP-3-O-[(3R)-3-hydroxyacyl]-alpha-D-glucosamine + acetate. It functions in the pathway glycolipid biosynthesis; lipid IV(A) biosynthesis; lipid IV(A) from (3R)-3-hydroxytetradecanoyl-[acyl-carrier-protein] and UDP-N-acetyl-alpha-D-glucosamine: step 2/6. Its function is as follows. Catalyzes the hydrolysis of UDP-3-O-myristoyl-N-acetylglucosamine to form UDP-3-O-myristoylglucosamine and acetate, the committed step in lipid A biosynthesis. In Haemophilus influenzae (strain 86-028NP), this protein is UDP-3-O-acyl-N-acetylglucosamine deacetylase.